The sequence spans 325 residues: MKTLCSFLQISRNMHQENQTTITEFILLGLSNQAEHQNLLFVLFLSMYVVTVVGNGLIIVAISLDIYLHTPMYLFLAYLSFADISSISNSVPKMLVNIQTNSQSISYESCITQMYFSIVFVVTDNLLLGTMAFDHFVAICHPLNYTTFMRARFGTLLTVISWFLSNIIALTHTLLLIQLLFCDHNTLPHFFCDLAPLLKLSCSDTMINELVLFIVGLSVIIFPFVLIFFSYVCIIRAVLGVSSTQGKWKAFSTCGSHLTIALLFYGTTVGVYFFPSSTHPEDTDKIGAVLFTVVTPMMNPFIYSLRNKDMKGALRKLINRKISSL.

Residues 1–38 lie on the Extracellular side of the membrane; that stretch reads MKTLCSFLQISRNMHQENQTTITEFILLGLSNQAEHQN. Asparagine 18 carries N-linked (GlcNAc...) asparagine glycosylation. The chain crosses the membrane as a helical span at residues 39–62; that stretch reads LLFVLFLSMYVVTVVGNGLIIVAI. The Cytoplasmic segment spans residues 63 to 70; it reads SLDIYLHT. Residues 71-92 form a helical membrane-spanning segment; it reads PMYLFLAYLSFADISSISNSVP. Topologically, residues 93-113 are extracellular; the sequence is KMLVNIQTNSQSISYESCITQ. Cysteine 110 and cysteine 202 are joined by a disulfide. The chain crosses the membrane as a helical span at residues 114 to 133; the sequence is MYFSIVFVVTDNLLLGTMAF. Over 134–152 the chain is Cytoplasmic; it reads DHFVAICHPLNYTTFMRAR. The helical transmembrane segment at 153–171 threads the bilayer; it reads FGTLLTVISWFLSNIIALT. Residues 172-208 are Extracellular-facing; that stretch reads HTLLLIQLLFCDHNTLPHFFCDLAPLLKLSCSDTMIN. A helical transmembrane segment spans residues 209–232; it reads ELVLFIVGLSVIIFPFVLIFFSYV. At 233 to 249 the chain is on the cytoplasmic side; it reads CIIRAVLGVSSTQGKWK. A helical membrane pass occupies residues 250 to 272; the sequence is AFSTCGSHLTIALLFYGTTVGVY. The Extracellular portion of the chain corresponds to 273–285; sequence FFPSSTHPEDTDK. The chain crosses the membrane as a helical span at residues 286 to 305; that stretch reads IGAVLFTVVTPMMNPFIYSL. At 306–325 the chain is on the cytoplasmic side; that stretch reads RNKDMKGALRKLINRKISSL.

The protein belongs to the G-protein coupled receptor 1 family.

It is found in the cell membrane. Odorant receptor. The protein is Olfactory receptor 1S2 (OR1S2) of Homo sapiens (Human).